The sequence spans 286 residues: Pantothenate synthetase (286 aa).

Residue 32-39 (MGALHEGH) participates in ATP binding. His39 acts as the Proton donor in catalysis. Gln63 is a binding site for (R)-pantoate. Gln63 contributes to the beta-alanine binding site. Position 149-152 (149-152 (GEKD)) interacts with ATP. Residue Gln155 participates in (R)-pantoate binding. Residues Leu178 and 186–189 (SSSR) contribute to the ATP site.

It belongs to the pantothenate synthetase family. As to quaternary structure, homodimer.

It is found in the cytoplasm. The catalysed reaction is (R)-pantoate + beta-alanine + ATP = (R)-pantothenate + AMP + diphosphate + H(+). It participates in cofactor biosynthesis; (R)-pantothenate biosynthesis; (R)-pantothenate from (R)-pantoate and beta-alanine: step 1/1. Functionally, catalyzes the condensation of pantoate with beta-alanine in an ATP-dependent reaction via a pantoyl-adenylate intermediate. This Bartonella quintana (strain Toulouse) (Rochalimaea quintana) protein is Pantothenate synthetase.